The sequence spans 329 residues: Ketol-acid reductoisomerase (NADP(+)) (329 aa).

Positions 2-182 (TQLFYDTDAD…GGTRAGILET (181 aa)) constitute a KARI N-terminal Rossmann domain. NADP(+) contacts are provided by residues 25–28 (YGSQ), Ser-51, Ser-53, and 83–86 (DEFQ). The active site involves His-108. Residue Gly-134 coordinates NADP(+). Residues 183–328 (NFKEETETDL…KSLRSMFSWL (146 aa)) enclose the KARI C-terminal knotted domain. Mg(2+) is bound by residues Asp-191, Glu-195, Glu-227, and Glu-231. Substrate is bound at residue Ser-252.

It belongs to the ketol-acid reductoisomerase family. Mg(2+) serves as cofactor.

The catalysed reaction is (2R)-2,3-dihydroxy-3-methylbutanoate + NADP(+) = (2S)-2-acetolactate + NADPH + H(+). It catalyses the reaction (2R,3R)-2,3-dihydroxy-3-methylpentanoate + NADP(+) = (S)-2-ethyl-2-hydroxy-3-oxobutanoate + NADPH + H(+). It participates in amino-acid biosynthesis; L-isoleucine biosynthesis; L-isoleucine from 2-oxobutanoate: step 2/4. Its pathway is amino-acid biosynthesis; L-valine biosynthesis; L-valine from pyruvate: step 2/4. Functionally, involved in the biosynthesis of branched-chain amino acids (BCAA). Catalyzes an alkyl-migration followed by a ketol-acid reduction of (S)-2-acetolactate (S2AL) to yield (R)-2,3-dihydroxy-isovalerate. In the isomerase reaction, S2AL is rearranged via a Mg-dependent methyl migration to produce 3-hydroxy-3-methyl-2-ketobutyrate (HMKB). In the reductase reaction, this 2-ketoacid undergoes a metal-dependent reduction by NADPH to yield (R)-2,3-dihydroxy-isovalerate. The chain is Ketol-acid reductoisomerase (NADP(+)) from Prochlorococcus marinus (strain MIT 9301).